Reading from the N-terminus, the 304-residue chain is MTKVSIIGAAGTVGAAAGYNIALRDIADELVFVDIPDQRETTIGQAADANHGIAYDSNTTVVQGEYEDTAGSDVVVITAGIPRKEGQTRIDLAGDNAPIMEDIGASLDEYNDDYVSITTSNPVDLLNRHLYEAGDRDRHKVIGFGGRLDSARFRYVLSERFDVPVQNVEATILGEHGDAQVPVFSKVRVDGADPEFDGDEKEEILGDLQESAMDVISRKGATQWGPATGVAHMVEAVLNDTGEVLPGSLVLDGEYGYEDTAFGVPVKLGANGIEEVVEWDLDDYESELMDDAAEKLSDQYDKIS.

Residues 8-14 and Asp-34 contribute to the NAD(+) site; that span reads GAAGTVG. 2 residues coordinate substrate: Arg-83 and Arg-89. NAD(+) is bound by residues Asn-96 and 119–121; that span reads TSN. Asn-121 and Arg-152 together coordinate substrate. His-176 serves as the catalytic Proton acceptor.

The protein belongs to the LDH/MDH superfamily.

It carries out the reaction (S)-malate + NAD(+) = oxaloacetate + NADH + H(+). Functionally, catalyzes the reversible oxidation of malate to oxaloacetate. The sequence is that of Malate dehydrogenase (mdh) from Natronomonas pharaonis (strain ATCC 35678 / DSM 2160 / CIP 103997 / JCM 8858 / NBRC 14720 / NCIMB 2260 / Gabara) (Halobacterium pharaonis).